The primary structure comprises 414 residues: Ferredoxin--NAD(P)(+) reductase fdr (414 aa).

7–38 is an FAD binding site; the sequence is DVVIVGAGHGGAQTAIALRQNGFAGTIAIIGA. Residue 149–177 coordinates NAD(+); it reads KVVIIGGGYIGLEAAAVMAKFGKNVTLIE.

The protein belongs to the FAD-dependent oxidoreductase family. As to quaternary structure, monomer. Carbazole 1,9a-dioxygenase complex consists of a terminal oxygenase component CarAa, a ferredoxin reductase component fdr and a ferredoxin component CarAc. The cofactor is FAD.

It catalyses the reaction 2 reduced [2Fe-2S]-[ferredoxin] + NAD(+) + H(+) = 2 oxidized [2Fe-2S]-[ferredoxin] + NADH. It carries out the reaction 2 reduced [2Fe-2S]-[ferredoxin] + NADP(+) + H(+) = 2 oxidized [2Fe-2S]-[ferredoxin] + NADPH. Its function is as follows. Part of the multicomponent carbazole 1,9a-dioxygenase (CARDO), that converts carbazole (CAR) into 2-aminobiphenyl-2,3-diol. The polypeptide is Ferredoxin--NAD(P)(+) reductase fdr (fdr) (Sphingomonas sp).